We begin with the raw amino-acid sequence, 145 residues long: Large ribosomal subunit protein uL11 (145 aa).

It belongs to the universal ribosomal protein uL11 family. Part of the ribosomal stalk of the 50S ribosomal subunit. Interacts with L10 and the large rRNA to form the base of the stalk. L10 forms an elongated spine to which L12 dimers bind in a sequential fashion forming a multimeric L10(L12)X complex. One or more lysine residues are methylated.

In terms of biological role, forms part of the ribosomal stalk which helps the ribosome interact with GTP-bound translation factors. This Coxiella burnetii (strain Dugway 5J108-111) protein is Large ribosomal subunit protein uL11.